The primary structure comprises 129 residues: L-ectoine synthase (129 aa).

This sequence belongs to the ectoine synthase family.

The catalysed reaction is (2S)-4-acetamido-2-aminobutanoate = L-ectoine + H2O. Its pathway is amine and polyamine biosynthesis; ectoine biosynthesis; L-ectoine from L-aspartate 4-semialdehyde: step 3/3. Functionally, catalyzes the circularization of gamma-N-acetyl-alpha,gamma-diaminobutyric acid (ADABA) to ectoine (1,4,5,6-tetrahydro-2-methyl-4-pyrimidine carboxylic acid), which is an excellent osmoprotectant. The sequence is that of L-ectoine synthase from Marinomonas sp. (strain MWYL1).